We begin with the raw amino-acid sequence, 1144 residues long: MTEPTYIPLRLHTEFSITDGMVRIKKLIAKAQEYGLPALGISDLMNEFGLVKFYKACRSAGIKPIGAADVRIGNPDAPDKPFRAMLIIRNDAGYLRLSELLTAAYVGKDRNVHHAELNPEWLENGDNSGLICLSGAHYGEVGVNLLNGNEDAARTAALKYAAWFPDAFYMELQRLPERPEWEACVSGSVKLAEELGLPVVATHPTQFMSRDDFNAHEARVCIAGGWVLTDKKRPRDFTPGQFFIPPETMAERFADLPEALENTVEIAKRCNLHITLGKNFLPLFPTPDGLSLDDYLIKLSNEGLQERMVQLYPDEAERAAKMPEYQERLDFELNIIIQMKFPGYFLIVQDFINWAKTHGCPVGPGRGSGAGSLVAYSLKITDLDPLKYALLFERFLNPERVSMPDFDVDFCQSNRGRVIEYVREKYGAEAVSQIVTFGTMSSKAVIRDVGRVLELPFMLCDKLSKLIPLEANKPLSLEKAMETEPQIQELIEAEEADELITLAKKLEDLTRGLGMHAGGVLIAPGKISDYSPVYQADESASPVSMYDKGDVEDVGLVKFDFLGLRNLTIIEMAQNNIKNTTGDIIDVGKIPLDDQVAYQIFRDANTTAVFQFESTGMKKMLKTAHTTKFEELIAFVSLYRPGPMDNIPDFVARMKGQEFQYIHPLLEGILAPTYGIMVYQEQVMQAAQIIGGYSLGGADLLRRAMGKKKPEEMVKHREIFAEGAAKQGISREKSDEIFNYMEKFAGYGFNKSHAAAYALISYQTAWLKAHYPAEFMAATMSSELDNTDQLKHFYDDCRANGIEFLPPDINESDYRFTPYPDMKIRYALGAIKGTGEAAVESITAARQSGGKFTGLLDFCERVGKEHMNRRTLEALIRGGAFDSIEPNRAMLLANIDLAMDNADQKAANANQGGLFDMMEDAIEPVRLIDAPMWSESEKLAEEKTVIGFYLSGHPFGPYAQEVRQIAPTKLDRLKPQDSVRLAGFVTAVRTMMGKRGKIAFVSLEDLSGQVEIMVGGQTLENCADCLKADQVLIIESKVSRDDYGGGDGLRILANQVMTLQTARERYARSLSLALAPHHDIGGLVRLLAAHQLPDTPRIPLQLSYANEKASGRLQVPPKWTVTPSSALFGELETLLGSRSVRVNW.

This sequence belongs to the DNA polymerase type-C family. DnaE subfamily. As to quaternary structure, DNA polymerase III contains a core (composed of alpha, epsilon and theta chains) that associates with a tau subunit. This core dimerizes to form the PolIII' complex. PolIII' associates with the gamma complex (composed of gamma, delta, delta', psi and chi chains) and with the beta chain to form the complete DNA polymerase III complex.

It localises to the cytoplasm. It catalyses the reaction DNA(n) + a 2'-deoxyribonucleoside 5'-triphosphate = DNA(n+1) + diphosphate. Functionally, DNA polymerase III is a complex, multichain enzyme responsible for most of the replicative synthesis in bacteria. This DNA polymerase also exhibits 3' to 5' exonuclease activity. The alpha chain is the DNA polymerase. The sequence is that of DNA polymerase III subunit alpha (dnaE) from Neisseria meningitidis serogroup B (strain ATCC BAA-335 / MC58).